We begin with the raw amino-acid sequence, 174 residues long: Protein RESTRICTED TEV MOVEMENT 1 (174 aa).

One can recognise a Jacalin-type lectin domain in the interval M1 to P152.

Belongs to the jacalin lectin family. Self-interacts. Interacts with RTM3. As to expression, expressed at low levels exclusively in phloem-associated cells (e.g. sieve elements and adjacent cells).

Its subcellular location is the cytoplasm. Required for the restriction of long-distance movement of the pathogenic tobacco etch virus (TEV) without causing a hypersensitive response or inducing systemic acquired resistance. The sequence is that of Protein RESTRICTED TEV MOVEMENT 1 (RTM1) from Arabidopsis thaliana (Mouse-ear cress).